A 314-amino-acid chain; its full sequence is MLGKGGKRKFDEHEDGLEGKIVSPCDGPSKVSYTLQRQTIFNISLMKLYNHRPLTEPSLQKTVLINNMLRRIQEELKQEGSLRPMFTPSSQPTTEPSDSYREAPPAFSHLASPSSHPCDLGSTTPLEACLTPASLLEDDDDTFCTSQAMQPTAPTKLSPPALLPEKDSFSSALDEIEELCPTSTSTEAATAATDSVKGTSSEAGTQKLDGPQESRADDSKLMDSLPGNFEITTSTGFLTDLTLDDILFADIDTSMYDFDPCTSSSGTASKMAPVSADDLLKTLAPYSSQPVTPSQPFKMDLTELDHIMEVLVGS.

Residues 33–80 form the SERTA domain; that stretch reads YTLQRQTIFNISLMKLYNHRPLTEPSLQKTVLINNMLRRIQEELKQEG. 2 disordered regions span residues 77-119 and 181-222; these read KQEG…HPCD and PTST…SKLM. The segment covering 87–97 has biased composition (polar residues); sequence TPSSQPTTEPS. Over residues 182 to 193 the composition is skewed to low complexity; sequence TSTSTEAATAAT. Residues 210–221 show a composition bias toward basic and acidic residues; the sequence is GPQESRADDSKL. A required for transactivation activity region spans residues 235–311; that stretch reads TGFLTDLTLD…TELDHIMEVL (77 aa). Residues 238-243 carry the Nuclear export signal (NES) motif; the sequence is LTDLTL.

In terms of assembly, interacts with XPO1; which mediates nuclear export. Interacts with TFDP1; modulates transactivation activity of TFDP1/E2F complexes. Post-translationally, polyubiquitinated, which promotes proteasomal degradation. In terms of tissue distribution, expressed in adipose tissue.

It is found in the nucleus. Its subcellular location is the cytoplasm. In terms of biological role, acts at E2F-responsive promoters as coregulator to integrate signals provided by PHD- and/or bromodomain-containing transcription factors. May act as coactivator as well as corepressor of E2F1-TFDP1 and E2F4-TFDP1 complexes on E2F consensus binding sites, which would activate or inhibit E2F-target genes expression. Modulates fat storage by down-regulating the expression of key genes involved in adipocyte lipolysis, thermogenesis and oxidative metabolism. This Homo sapiens (Human) protein is SERTA domain-containing protein 2 (SERTAD2).